Reading from the N-terminus, the 343-residue chain is Dimethyladenosine transferase 1, mitochondrial (343 aa).

The N-terminal 27 residues, 1 to 27, are a transit peptide targeting the mitochondrion; that stretch reads MAASGKLSTWRLPPLPTIREIIKLLRV. S-adenosyl-L-methionine is bound by residues Leu-38, Gly-63, Glu-85, Lys-86, Asp-111, Val-112, and Asn-141.

Belongs to the class I-like SAM-binding methyltransferase superfamily. rRNA adenine N(6)-methyltransferase family. KsgA subfamily. As to quaternary structure, interacts with mitochondrial RNA polymerase POLRMT. Interacts with TFAM. Bound to the maturing mtSSU until the late stages of assembly.

The protein localises to the mitochondrion. The enzyme catalyses adenosine(N)/adenosine(N+1) in rRNA + 4 S-adenosyl-L-methionine = N(6)-dimethyladenosine(N)/N(6)-dimethyladenosine(N+1) in rRNA + 4 S-adenosyl-L-homocysteine + 4 H(+). Its function is as follows. S-adenosyl-L-methionine-dependent methyltransferase which specifically dimethylates mitochondrial 12S rRNA at the conserved stem loop. Also required for basal transcription of mitochondrial DNA, probably via its interaction with POLRMT and TFAM. Stimulates transcription independently of the methyltransferase activity. Functionally, mitochondrial methyltransferase which uses S-adenosyl methionine to dimethylate two highly conserved adjacent adenosine residues (A1583 and A1584) within the loop of helix 45 at the 3-prime end of 12S rRNA, thereby regulating the assembly or stability of the small subunit of the mitochondrial ribosome. Also required for basal transcription of mitochondrial DNA, probably via its interaction with POLRMT and TFAM. Stimulates transcription independently of the methyltransferase activity. The sequence is that of Dimethyladenosine transferase 1, mitochondrial (TFB1M) from Pongo abelii (Sumatran orangutan).